The chain runs to 313 residues: T-box protein 37 (313 aa).

The segment at residues 19 to 195 is a DNA-binding region (T-box); the sequence is IWEKFYPKTE…HNKFASGFRS (177 aa). The disordered stretch occupies residues 193–228; the sequence is FRSNGKRRLSSESENSENSPPKRSASAISSLTPPAI.

It is found in the nucleus. Its function is as follows. Transcription factor. Required for mesodermal induction, acting redundantly with transcription factor tbx-38. Together with tbx-38, acts by inducing cell fates in the AB lineage, thereby playing a role in development of the anterior pharynx. The sequence is that of T-box protein 37 (tbx-37) from Caenorhabditis elegans.